A 70-amino-acid chain; its full sequence is Neuropeptide SIFamide (70 aa).

Positions 1–22 (MRFIVALCLFAIVMCIIHKAEG) are cleaved as a signal peptide. F34 is modified (phenylalanine amide). Positions 38–70 (GVVEYDTTGRALSALCEIASETCQAWYQTLENK) are excised as a propeptide.

Expressed in antennal lobe (AL) and gnathal ganglion (GNG) with expression detected in most animals (at protein level). Not expressed in corpora cardiaca (CC) and corpora allata (CA) (at protein level).

The protein localises to the secreted. Its function is as follows. Ligand for the neuropeptide SIFamide receptor. This Agrotis ipsilon (Black cutworm moth) protein is Neuropeptide SIFamide.